Consider the following 338-residue polypeptide: MKEFRKILEDKAFFFTTLYILISFLVFKIFPDVFAVIVLMVFFTLLLDPVIRFLEKLKFGKYFSRVAALLLFFFVMVYSLYMIIPPVFNEFGSFIEFMTKVFESKIWKDYIKSPELMPVFDKIMNFLEPKLTDFLNYVFSLVTTNFVSVTTIIVFTLFGLGYTVFYIREIASFFVLIYPKSVRAEAREFFRDVYASMGRYIRVIFINAVIIGLSYWIVFEAFNLKYSAIISLWAFVTNFIPIVGVVLEYIPVLLFSLTLGVKGVLLIALFAILIHAVAFVVFIQLMKGLEKLNPVYIILSILFFGKLFGLFGSFVGVPLALFFKVFWRKFLRPLFEAG.

7 consecutive transmembrane segments (helical) span residues 20 to 40 (ILIS…IVLM), 68 to 88 (ALLL…PPVF), 147 to 167 (VSVT…VFYI), 203 to 223 (VIFI…EAFN), 239 to 259 (FIPI…SLTL), 263 to 283 (GVLL…VVFI), and 297 to 317 (IILS…FVGV).

Belongs to the autoinducer-2 exporter (AI-2E) (TC 2.A.86) family.

The protein resides in the cell membrane. In Thermotoga maritima (strain ATCC 43589 / DSM 3109 / JCM 10099 / NBRC 100826 / MSB8), this protein is Putative transport protein TM_1349.